Reading from the N-terminus, the 295-residue chain is Serpentine receptor class gamma-53 (295 aa).

6 helical membrane-spanning segments follow: residues 7-27 (IWLC…VLLS), 39-61 (VITM…RMVF), 121-141 (FYLL…QLLY), 173-193 (CFMS…LYQV), 211-230 (MSLI…AWQT), and 241-261 (IELL…ILLI).

This sequence belongs to the nematode receptor-like protein srg family.

It is found in the membrane. The chain is Serpentine receptor class gamma-53 (srg-53) from Caenorhabditis elegans.